The primary structure comprises 239 residues: Peptidyl-tRNA hydrolase (239 aa).

A tRNA-binding site is contributed by Tyr-14. Residue His-19 is the Proton acceptor of the active site. The tRNA site is built by Phe-64, Asn-66, and Asn-112.

This sequence belongs to the PTH family. As to quaternary structure, monomer.

The protein localises to the cytoplasm. The catalysed reaction is an N-acyl-L-alpha-aminoacyl-tRNA + H2O = an N-acyl-L-amino acid + a tRNA + H(+). Hydrolyzes ribosome-free peptidyl-tRNAs (with 1 or more amino acids incorporated), which drop off the ribosome during protein synthesis, or as a result of ribosome stalling. Its function is as follows. Catalyzes the release of premature peptidyl moieties from peptidyl-tRNA molecules trapped in stalled 50S ribosomal subunits, and thus maintains levels of free tRNAs and 50S ribosomes. The protein is Peptidyl-tRNA hydrolase of Rhizobium meliloti (strain 1021) (Ensifer meliloti).